The following is a 304-amino-acid chain: Oxygen-dependent coproporphyrinogen-III oxidase (304 aa).

Ser-94 is a binding site for substrate. Residues His-98 and His-108 each coordinate a divalent metal cation. The active-site Proton donor is the His-108. 110-112 is a binding site for substrate; it reads NVR. His-147 and His-177 together coordinate a divalent metal cation. Residues 242–277 form an important for dimerization region; that stretch reads YVEFNLVYDRGTLFGLQTGGRTESILMSMPPLVRWE. Position 260–262 (260–262) interacts with substrate; it reads GGR.

The protein belongs to the aerobic coproporphyrinogen-III oxidase family. Homodimer. A divalent metal cation is required as a cofactor.

The protein resides in the cytoplasm. The enzyme catalyses coproporphyrinogen III + O2 + 2 H(+) = protoporphyrinogen IX + 2 CO2 + 2 H2O. Its pathway is porphyrin-containing compound metabolism; protoporphyrin-IX biosynthesis; protoporphyrinogen-IX from coproporphyrinogen-III (O2 route): step 1/1. Functionally, involved in the heme biosynthesis. Catalyzes the aerobic oxidative decarboxylation of propionate groups of rings A and B of coproporphyrinogen-III to yield the vinyl groups in protoporphyrinogen-IX. The sequence is that of Oxygen-dependent coproporphyrinogen-III oxidase from Shewanella piezotolerans (strain WP3 / JCM 13877).